The following is a 356-amino-acid chain: DNA polymerase IV (356 aa).

A UmuC domain is found at 6 to 187; that stretch reads IIHIDMDYFF…LDIGDFPGVG (182 aa). The Mg(2+) site is built by Asp-10 and Asp-105. Residue Glu-106 is part of the active site.

Belongs to the DNA polymerase type-Y family. Monomer. The cofactor is Mg(2+).

Its subcellular location is the cytoplasm. It catalyses the reaction DNA(n) + a 2'-deoxyribonucleoside 5'-triphosphate = DNA(n+1) + diphosphate. Functionally, poorly processive, error-prone DNA polymerase involved in untargeted mutagenesis. Copies undamaged DNA at stalled replication forks, which arise in vivo from mismatched or misaligned primer ends. These misaligned primers can be extended by PolIV. Exhibits no 3'-5' exonuclease (proofreading) activity. May be involved in translesional synthesis, in conjunction with the beta clamp from PolIII. The sequence is that of DNA polymerase IV from Staphylococcus aureus (strain JH1).